A 745-amino-acid chain; its full sequence is 5-methyltetrahydropteroyltriglutamate--homocysteine methyltransferase (745 aa).

5-methyltetrahydropteroyltri-L-glutamate-binding positions include 19–22 (RELK) and Lys-119. L-homocysteine is bound by residues 418 to 420 (IGS) and Glu-471. L-methionine-binding positions include 418-420 (IGS) and Glu-471. 5-methyltetrahydropteroyltri-L-glutamate contacts are provided by residues 502 to 503 (RC) and Trp-548. Asp-586 contributes to the L-homocysteine binding site. Asp-586 is an L-methionine binding site. Position 592 (Glu-592) interacts with 5-methyltetrahydropteroyltri-L-glutamate. 3 residues coordinate Zn(2+): His-628, Cys-630, and Glu-652. The active-site Proton donor is His-681. Position 713 (Cys-713) interacts with Zn(2+).

Belongs to the vitamin-B12 independent methionine synthase family. The cofactor is Zn(2+).

The catalysed reaction is 5-methyltetrahydropteroyltri-L-glutamate + L-homocysteine = tetrahydropteroyltri-L-glutamate + L-methionine. The protein operates within amino-acid biosynthesis; L-methionine biosynthesis via de novo pathway; L-methionine from L-homocysteine (MetE route): step 1/1. In terms of biological role, catalyzes the transfer of a methyl group from 5-methyltetrahydrofolate to homocysteine resulting in methionine formation. The polypeptide is 5-methyltetrahydropteroyltriglutamate--homocysteine methyltransferase (Corynebacterium glutamicum (strain R)).